The sequence spans 227 residues: MLLHIPNVLNAEQLRLVRERLDQAGDAWVDGRATAGYQGAPVKRNQQIAEHTPVARELGDVILASIERNPLFISAVLPNQVYPPLFNRYEGGMQFGSHVDGAVRVLPNGVKLRTDVSVTLFISDPADYDGGELVIEDTYGVQQVKLPAGDMIVYPATSLHQVTPVTRGARIASFFWVQSLVRSDTQRAMLFDMDTAIQRLNASHADDTARRSLVGIYHNLLRTWSET.

The Fe2OG dioxygenase domain maps to 80-179 (QVYPPLFNRY…RIASFFWVQS (100 aa)). Fe cation contacts are provided by His98, Asp100, and His160. A 2-oxoglutarate-binding site is contributed by Arg170.

It depends on Fe(2+) as a cofactor. Requires L-ascorbate as cofactor.

In Paraburkholderia phytofirmans (strain DSM 17436 / LMG 22146 / PsJN) (Burkholderia phytofirmans), this protein is PKHD-type hydroxylase Bphyt_7102.